The chain runs to 259 residues: Thiazole synthase (259 aa).

The active-site Schiff-base intermediate with DXP is K98. Residues G159, 185–186, and 207–208 each bind 1-deoxy-D-xylulose 5-phosphate; these read AG and NS.

This sequence belongs to the ThiG family. As to quaternary structure, homotetramer. Forms heterodimers with either ThiH or ThiS.

It is found in the cytoplasm. It carries out the reaction [ThiS sulfur-carrier protein]-C-terminal-Gly-aminoethanethioate + 2-iminoacetate + 1-deoxy-D-xylulose 5-phosphate = [ThiS sulfur-carrier protein]-C-terminal Gly-Gly + 2-[(2R,5Z)-2-carboxy-4-methylthiazol-5(2H)-ylidene]ethyl phosphate + 2 H2O + H(+). It functions in the pathway cofactor biosynthesis; thiamine diphosphate biosynthesis. Its function is as follows. Catalyzes the rearrangement of 1-deoxy-D-xylulose 5-phosphate (DXP) to produce the thiazole phosphate moiety of thiamine. Sulfur is provided by the thiocarboxylate moiety of the carrier protein ThiS. In vitro, sulfur can be provided by H(2)S. The sequence is that of Thiazole synthase from Chlorobium phaeobacteroides (strain BS1).